A 468-amino-acid chain; its full sequence is Tripartite motif-containing protein 75 (468 aa).

An RING-type zinc finger spans residues 16–57 (CSICLDYLSDPVTIECGHNFCRSCIQQSWLDLQELFPCPVCR). Residues 92–133 (EETTLCEKHNQPLSVFCKEDLMVLCPLCTQPPDHQGHHVRPI) form a B box-type zinc finger. Zn(2+)-binding residues include C97, H100, C119, and H125. Positions 170–222 (LELREMVENQRQELSSEFEHLNQFLDREQQAVLSRLAEEEKDNQQKLSANITA) form a coiled coil. Residues 276-468 (CSFPPQYSAL…LRICTGTVCE (193 aa)) enclose the B30.2/SPRY domain.

It belongs to the TRIM/RBCC family.

The protein resides in the cytoplasm. It is found in the cytoskeleton. It localises to the spindle. Its function is as follows. May play a role in female meiosis. In Homo sapiens (Human), this protein is Tripartite motif-containing protein 75.